A 259-amino-acid chain; its full sequence is Flap endonuclease Xni (259 aa).

Asp109 lines the Mg(2+) pocket. A 5'-3' exonuclease domain is found at 165-255 (VKPQQLSDYW…FNLQDLRFTA (91 aa)). Leu176, Ile187, and Ile190 together coordinate K(+). The tract at residues 189–194 (GIGPKA) is interaction with DNA.

This sequence belongs to the Xni family. It depends on Mg(2+) as a cofactor. K(+) is required as a cofactor.

Has flap endonuclease activity. During DNA replication, flap endonucleases cleave the 5'-overhanging flap structure that is generated by displacement synthesis when DNA polymerase encounters the 5'-end of a downstream Okazaki fragment. The chain is Flap endonuclease Xni from Vibrio vulnificus (strain CMCP6).